Here is a 543-residue protein sequence, read N- to C-terminus: Probable ubiquitin-conjugating enzyme E2 26 (543 aa).

A disordered region spans residues 1–21 (MEPDVVEIPPPPLIASGSRTR). Residues 271–431 (NWVKKVQADW…VFLLSLKTMV (161 aa)) form the UBC core domain. Cysteine 357 functions as the Glycyl thioester intermediate in the catalytic mechanism. The interval 514-543 (LAEKPEPPMSNANTENQSKKKTRKRSRSSR) is disordered. Basic residues predominate over residues 532-543 (KKKTRKRSRSSR).

The protein belongs to the ubiquitin-conjugating enzyme family.

It carries out the reaction S-ubiquitinyl-[E1 ubiquitin-activating enzyme]-L-cysteine + [E2 ubiquitin-conjugating enzyme]-L-cysteine = [E1 ubiquitin-activating enzyme]-L-cysteine + S-ubiquitinyl-[E2 ubiquitin-conjugating enzyme]-L-cysteine.. The protein operates within protein modification; protein ubiquitination. Accepts the ubiquitin from the E1 complex and catalyzes its covalent attachment to other proteins. This is Probable ubiquitin-conjugating enzyme E2 26 (UBC26) from Arabidopsis thaliana (Mouse-ear cress).